Reading from the N-terminus, the 639-residue chain is Probable potassium transport system protein Kup 1 (639 aa).

A run of 12 helical transmembrane segments spans residues 27–47 (AILG…LYAF), 64–84 (VIGL…FKYI), 115–135 (VLIV…MITP), 151–171 (PAMD…LFAI), 182–202 (FFGP…LIHI), 225–245 (GFYG…AEAL), 261–281 (WFCL…ALVL), 293–313 (LMFP…ATII), 351–371 (IYLP…VLTF), 377–397 (LATA…LMFF), 408–428 (IWLA…FLGA), and 430–450 (LLKI…FTVI).

It belongs to the HAK/KUP transporter (TC 2.A.72) family.

The protein localises to the cell inner membrane. The catalysed reaction is K(+)(in) + H(+)(in) = K(+)(out) + H(+)(out). In terms of biological role, transport of potassium into the cell. Likely operates as a K(+):H(+) symporter. This Agrobacterium fabrum (strain C58 / ATCC 33970) (Agrobacterium tumefaciens (strain C58)) protein is Probable potassium transport system protein Kup 1.